The sequence spans 316 residues: Olfactory receptor 2K2 (316 aa).

The Extracellular portion of the chain corresponds to 1 to 20 (MQGENFTIWSIFFLEGFSQY). Asn-5 carries an N-linked (GlcNAc...) asparagine glycan. The helical transmembrane segment at 21-41 (PGLEVVLFVFSLVMYLTTLLG) threads the bilayer. At 42–65 (NSTLILITILDSRLKTPMYLFLGN) the chain is on the cytoplasmic side. The helical transmembrane segment at 66–86 (LSFMDICYTSASVPTLLVNLL) threads the bilayer. The Extracellular portion of the chain corresponds to 87-97 (SSQKTIIFSGC). Cys-97 and Cys-188 are disulfide-bonded. The chain crosses the membrane as a helical span at residues 98–118 (AVQMYLSLAMGSTECVLLAVM). The Cytoplasmic segment spans residues 119-143 (AYDRYVAICNPLRYSIIMNRCVCAR). Residues 144 to 164 (MATVSWVTGCLTALLETSFAL) form a helical membrane-spanning segment. The Extracellular segment spans residues 165–199 (QIPLCGNLIDHFTCEILAVLKLACTSSLLMNTIML). A helical transmembrane segment spans residues 200–220 (VVSILLLPIPMLLVCISYIFI). Residues 221-238 (LSTILRITSAEGRNKAFS) are Cytoplasmic-facing. The helical transmembrane segment at 239–259 (TCGAHLTVVILYYGAALSMYL) threads the bilayer. Topologically, residues 260–270 (KPSSSNAQKID) are extracellular. Residues 271-291 (KIISLLYGVLTPMLNPIIYSL) form a helical membrane-spanning segment. At 292–316 (RNKEVKDAMKKLLGKITLHQTHEHL) the chain is on the cytoplasmic side.

Belongs to the G-protein coupled receptor 1 family.

It localises to the cell membrane. Odorant receptor. This is Olfactory receptor 2K2 (OR2K2) from Homo sapiens (Human).